Reading from the N-terminus, the 141-residue chain is Large ribosomal subunit protein uL11 (141 aa).

This sequence belongs to the universal ribosomal protein uL11 family. As to quaternary structure, part of the ribosomal stalk of the 50S ribosomal subunit. Interacts with L10 and the large rRNA to form the base of the stalk. L10 forms an elongated spine to which L12 dimers bind in a sequential fashion forming a multimeric L10(L12)X complex. Post-translationally, one or more lysine residues are methylated.

Functionally, forms part of the ribosomal stalk which helps the ribosome interact with GTP-bound translation factors. In Listeria innocua serovar 6a (strain ATCC BAA-680 / CLIP 11262), this protein is Large ribosomal subunit protein uL11.